Reading from the N-terminus, the 197-residue chain is ATP-dependent Clp protease proteolytic subunit (197 aa).

The active-site Nucleophile is the serine 98. The active site involves histidine 123.

The protein belongs to the peptidase S14 family. In terms of assembly, fourteen ClpP subunits assemble into 2 heptameric rings which stack back to back to give a disk-like structure with a central cavity, resembling the structure of eukaryotic proteasomes.

The protein resides in the cytoplasm. The enzyme catalyses Hydrolysis of proteins to small peptides in the presence of ATP and magnesium. alpha-casein is the usual test substrate. In the absence of ATP, only oligopeptides shorter than five residues are hydrolyzed (such as succinyl-Leu-Tyr-|-NHMec, and Leu-Tyr-Leu-|-Tyr-Trp, in which cleavage of the -Tyr-|-Leu- and -Tyr-|-Trp bonds also occurs).. Functionally, cleaves peptides in various proteins in a process that requires ATP hydrolysis. Has a chymotrypsin-like activity. Plays a major role in the degradation of misfolded proteins. The protein is ATP-dependent Clp protease proteolytic subunit of Haemophilus ducreyi (strain 35000HP / ATCC 700724).